Here is a 127-residue protein sequence, read N- to C-terminus: Large ribosomal subunit protein bL12 (127 aa).

The protein belongs to the bacterial ribosomal protein bL12 family. In terms of assembly, homodimer. Part of the ribosomal stalk of the 50S ribosomal subunit. Forms a multimeric L10(L12)X complex, where L10 forms an elongated spine to which 2 to 4 L12 dimers bind in a sequential fashion. Binds GTP-bound translation factors.

Functionally, forms part of the ribosomal stalk which helps the ribosome interact with GTP-bound translation factors. Is thus essential for accurate translation. This is Large ribosomal subunit protein bL12 from Bordetella bronchiseptica (strain ATCC BAA-588 / NCTC 13252 / RB50) (Alcaligenes bronchisepticus).